Here is a 568-residue protein sequence, read N- to C-terminus: Urease subunit alpha (568 aa).

Residues 130–568 form the Urease domain; sequence GGIDTHIHFI…LPMAQRYFLF (439 aa). Ni(2+) contacts are provided by histidine 135, histidine 137, and lysine 218. Lysine 218 bears the N6-carboxylysine mark. A substrate-binding site is contributed by histidine 220. 2 residues coordinate Ni(2+): histidine 247 and histidine 273. The active-site Proton donor is the histidine 321. Residue aspartate 361 participates in Ni(2+) binding.

This sequence belongs to the metallo-dependent hydrolases superfamily. Urease alpha subunit family. Heterotrimer of UreA (gamma), UreB (beta) and UreC (alpha) subunits. Three heterotrimers associate to form the active enzyme. It depends on Ni cation as a cofactor. Carboxylation allows a single lysine to coordinate two nickel ions.

It localises to the cytoplasm. The catalysed reaction is urea + 2 H2O + H(+) = hydrogencarbonate + 2 NH4(+). Its pathway is nitrogen metabolism; urea degradation; CO(2) and NH(3) from urea (urease route): step 1/1. This chain is Urease subunit alpha, found in Burkholderia ambifaria (strain ATCC BAA-244 / DSM 16087 / CCUG 44356 / LMG 19182 / AMMD) (Burkholderia cepacia (strain AMMD)).